The following is a 121-amino-acid chain: Large ribosomal subunit protein bL12 (121 aa).

Belongs to the bacterial ribosomal protein bL12 family. Homodimer. Part of the ribosomal stalk of the 50S ribosomal subunit. Forms a multimeric L10(L12)X complex, where L10 forms an elongated spine to which 2 to 4 L12 dimers bind in a sequential fashion. Binds GTP-bound translation factors.

In terms of biological role, forms part of the ribosomal stalk which helps the ribosome interact with GTP-bound translation factors. Is thus essential for accurate translation. The polypeptide is Large ribosomal subunit protein bL12 (Limosilactobacillus fermentum (strain NBRC 3956 / LMG 18251) (Lactobacillus fermentum)).